We begin with the raw amino-acid sequence, 165 residues long: Large ribosomal subunit protein uL15 (165 aa).

Residues 1 to 29 (MTSKKKRQRGSRTHGGGSHKNRRGAGHRG) show a composition bias toward basic residues. 2 disordered regions span residues 1–59 (MTSK…QKVQ) and 133–165 (KVEG…ADEE). Residues 30–47 (GRGDAGRDKHEFHNHEPL) are compositionally biased toward basic and acidic residues. Residues 154–165 (AEETEDADADEE) show a composition bias toward acidic residues.

This sequence belongs to the universal ribosomal protein uL15 family. As to quaternary structure, part of the 50S ribosomal subunit. Interacts weakly with proteins L18e and L32e.

In terms of biological role, binds to the 23S rRNA. The chain is Large ribosomal subunit protein uL15 (rpl15) from Haloarcula marismortui (strain ATCC 43049 / DSM 3752 / JCM 8966 / VKM B-1809) (Halobacterium marismortui).